Here is a 408-residue protein sequence, read N- to C-terminus: Probable pectate lyase 18 (408 aa).

Positions 1-24 (MKMQTKKLFITIVSFLLYAPLFLS) are cleaved as a signal peptide. Residue asparagine 42 is glycosylated (N-linked (GlcNAc...) asparagine). Ca(2+) contacts are provided by aspartate 206, aspartate 230, and aspartate 234. Arginine 286 is an active-site residue.

Belongs to the polysaccharide lyase 1 family. Ca(2+) serves as cofactor. In terms of tissue distribution, expressed in flowers, but not in leaves.

The enzyme catalyses Eliminative cleavage of (1-&gt;4)-alpha-D-galacturonan to give oligosaccharides with 4-deoxy-alpha-D-galact-4-enuronosyl groups at their non-reducing ends.. Its pathway is glycan metabolism; pectin degradation; 2-dehydro-3-deoxy-D-gluconate from pectin: step 2/5. This is Probable pectate lyase 18 from Arabidopsis thaliana (Mouse-ear cress).